Here is a 212-residue protein sequence, read N- to C-terminus: Cytidylate kinase (212 aa).

7 to 15 lines the ATP pocket; the sequence is GPAASGKGT.

The protein belongs to the cytidylate kinase family. Type 1 subfamily.

The protein resides in the cytoplasm. It carries out the reaction CMP + ATP = CDP + ADP. The enzyme catalyses dCMP + ATP = dCDP + ADP. In Bradyrhizobium diazoefficiens (strain JCM 10833 / BCRC 13528 / IAM 13628 / NBRC 14792 / USDA 110), this protein is Cytidylate kinase.